Consider the following 114-residue polypeptide: UPF0145 protein SSO1976 (114 aa).

The protein belongs to the UPF0145 family.

The chain is UPF0145 protein SSO1976 from Saccharolobus solfataricus (strain ATCC 35092 / DSM 1617 / JCM 11322 / P2) (Sulfolobus solfataricus).